Here is a 170-residue protein sequence, read N- to C-terminus: Small ribosomal subunit protein uS5 (170 aa).

The S5 DRBM domain maps to 13-76 (LLEKLVGVRR…ENARKNMISV (64 aa)).

The protein belongs to the universal ribosomal protein uS5 family. In terms of assembly, part of the 30S ribosomal subunit. Contacts proteins S4 and S8.

Functionally, with S4 and S12 plays an important role in translational accuracy. Located at the back of the 30S subunit body where it stabilizes the conformation of the head with respect to the body. The protein is Small ribosomal subunit protein uS5 of Nitrosococcus oceani (strain ATCC 19707 / BCRC 17464 / JCM 30415 / NCIMB 11848 / C-107).